A 310-amino-acid polypeptide reads, in one-letter code: Protoheme IX farnesyltransferase 2 (310 aa).

9 consecutive transmembrane segments (helical) span residues 25-45 (PGII…AAKG), 49-69 (LVLM…GCAI), 98-118 (HVLL…ALFT), 121-141 (LALL…SLYM), 145-165 (SVYG…VGYC), 176-196 (VILL…IAIF), 222-242 (IVLY…AGYT), 245-265 (AFMA…LKGY), and 277-297 (QVFG…ALDF).

It belongs to the UbiA prenyltransferase family. Protoheme IX farnesyltransferase subfamily.

Its subcellular location is the cell inner membrane. It carries out the reaction heme b + (2E,6E)-farnesyl diphosphate + H2O = Fe(II)-heme o + diphosphate. It functions in the pathway porphyrin-containing compound metabolism; heme O biosynthesis; heme O from protoheme: step 1/1. Its function is as follows. Converts heme B (protoheme IX) to heme O by substitution of the vinyl group on carbon 2 of heme B porphyrin ring with a hydroxyethyl farnesyl side group. The polypeptide is Protoheme IX farnesyltransferase 2 (Shewanella sp. (strain MR-4)).